Here is a 151-residue protein sequence, read N- to C-terminus: Small ribosomal subunit protein uS15 (151 aa).

The interval 1–20 is disordered; the sequence is MARLHSGKRGSSGSTRPLRT.

The protein belongs to the universal ribosomal protein uS15 family. In terms of assembly, part of the 30S ribosomal subunit.

The protein is Small ribosomal subunit protein uS15 of Methanococcus maripaludis (strain C7 / ATCC BAA-1331).